A 126-amino-acid polypeptide reads, in one-letter code: Large ribosomal subunit protein bL17c (126 aa).

The transit peptide at 1–10 (MIDNGGRFFA) directs the protein to the chloroplast.

In terms of assembly, component of the chloroplast large ribosomal subunit (LSU). Mature 70S chloroplast ribosomes of higher plants consist of a small (30S) and a large (50S) subunit. The 30S small subunit contains 1 molecule of ribosomal RNA (16S rRNA) and 24 different proteins. The 50S large subunit contains 3 rRNA molecules (23S, 5S and 4.5S rRNA) and 33 different proteins.

The protein resides in the plastid. The protein localises to the chloroplast. Component of the chloroplast ribosome (chloro-ribosome), a dedicated translation machinery responsible for the synthesis of chloroplast genome-encoded proteins, including proteins of the transcription and translation machinery and components of the photosynthetic apparatus. This Spinacia oleracea (Spinach) protein is Large ribosomal subunit protein bL17c (RPL17).